The primary structure comprises 326 residues: MNIKPKKYKPIKEEYIKSFKDMLLLRRFEEKCGQLYGMGEIGGFCHLYIGQEAVISAVELIKKKGDSTITSYRDHAHIILAGTEPKYVLAELMGRATGCSKGKGGSMHLFDIPNKFYGGHGIVGAQVPIGTGLAFAEKYNGTNNICFTFLGDGAVNQGQVYEAFNMASLWGLPVVYIIENNEYSMGTSVSRSTFMRDLYKKGESFGIRGFQLDGMDFEEMYNGTKQVAEYVRENSFPVILEVKTYRYRGHSMSDPAKYRSKEEVAKYKERDTLVRIRQIILDNKYATEEDLKAIERSVQEVIKVAVEFSENSPLPSEDELYTDIYV.

Heterodimer of an alpha and a beta chain. It depends on thiamine diphosphate as a cofactor.

It carries out the reaction N(6)-[(R)-lipoyl]-L-lysyl-[protein] + pyruvate + H(+) = N(6)-[(R)-S(8)-acetyldihydrolipoyl]-L-lysyl-[protein] + CO2. In terms of biological role, the pyruvate dehydrogenase complex catalyzes the overall conversion of pyruvate to acetyl-CoA and CO(2). It contains multiple copies of three enzymatic components: pyruvate dehydrogenase (E1), dihydrolipoamide acetyltransferase (E2) and lipoamide dehydrogenase (E3). This Rickettsia typhi (strain ATCC VR-144 / Wilmington) protein is Pyruvate dehydrogenase E1 component subunit alpha (pdhA).